The sequence spans 549 residues: Glucose-6-phosphate isomerase (549 aa).

E355 serves as the catalytic Proton donor. Residues H386 and K514 contribute to the active site.

It belongs to the GPI family.

The protein resides in the cytoplasm. The catalysed reaction is alpha-D-glucose 6-phosphate = beta-D-fructose 6-phosphate. Its pathway is carbohydrate biosynthesis; gluconeogenesis. It participates in carbohydrate degradation; glycolysis; D-glyceraldehyde 3-phosphate and glycerone phosphate from D-glucose: step 2/4. Catalyzes the reversible isomerization of glucose-6-phosphate to fructose-6-phosphate. The sequence is that of Glucose-6-phosphate isomerase from Salmonella schwarzengrund (strain CVM19633).